The chain runs to 141 residues: Small ribosomal subunit protein uS12 (141 aa).

The residue at position 102 (D102) is a 3-methylthioaspartic acid. Residues 115 to 141 (GDASGVEKRRQQRSLYGAKRPKKEASK) are disordered.

This sequence belongs to the universal ribosomal protein uS12 family. Part of the 30S ribosomal subunit. Contacts proteins S8 and S17. May interact with IF1 in the 30S initiation complex.

In terms of biological role, with S4 and S5 plays an important role in translational accuracy. Interacts with and stabilizes bases of the 16S rRNA that are involved in tRNA selection in the A site and with the mRNA backbone. Located at the interface of the 30S and 50S subunits, it traverses the body of the 30S subunit contacting proteins on the other side and probably holding the rRNA structure together. The combined cluster of proteins S8, S12 and S17 appears to hold together the shoulder and platform of the 30S subunit. The chain is Small ribosomal subunit protein uS12 from Ureaplasma parvum serovar 3 (strain ATCC 27815 / 27 / NCTC 11736).